We begin with the raw amino-acid sequence, 77 residues long: Acyl carrier protein (77 aa).

Residues 2–77 enclose the Carrier domain; it reads ADVLERVTKI…DAVTYIESHL (76 aa). Position 37 is an O-(pantetheine 4'-phosphoryl)serine (Ser37).

The protein belongs to the acyl carrier protein (ACP) family. 4'-phosphopantetheine is transferred from CoA to a specific serine of apo-ACP by AcpS. This modification is essential for activity because fatty acids are bound in thioester linkage to the sulfhydryl of the prosthetic group.

It is found in the cytoplasm. Its pathway is lipid metabolism; fatty acid biosynthesis. Carrier of the growing fatty acid chain in fatty acid biosynthesis. The protein is Acyl carrier protein of Bacillus mycoides (strain KBAB4) (Bacillus weihenstephanensis).